Consider the following 230-residue polypeptide: Fibrillarin-like rRNA/tRNA 2'-O-methyltransferase (230 aa).

S-adenosyl-L-methionine contacts are provided by residues 87–88, 105–106, 130–131, and 150–153; these read TT, EF, DA, and DVAQ.

The protein belongs to the methyltransferase superfamily. Fibrillarin family. Interacts with nop5. Component of box C/D small ribonucleoprotein (sRNP) particles that contain rpl7ae, FlpA and nop5, plus a guide RNA.

Functionally, involved in pre-rRNA and tRNA processing. Utilizes the methyl donor S-adenosyl-L-methionine to catalyze the site-specific 2'-hydroxyl methylation of ribose moieties in rRNA and tRNA. Site specificity is provided by a guide RNA that base pairs with the substrate. Methylation occurs at a characteristic distance from the sequence involved in base pairing with the guide RNA. The sequence is that of Fibrillarin-like rRNA/tRNA 2'-O-methyltransferase from Methanococcus maripaludis (strain C5 / ATCC BAA-1333).